A 481-amino-acid chain; its full sequence is Tryptophan--tRNA ligase, cytoplasmic (481 aa).

The 57-residue stretch at 12–68 (SPLELFNSIAAQGELVRSLKAGNAPKDEIESAVKMLLSLKMNYKTAMGEEYKAGCPP) folds into the WHEP-TRS domain. The interval 65 to 85 (GCPPGNSTAGSNGDPDATKAS) is disordered. The residue at position 158 (Lys158) is an N6-succinyllysine. Residues 168–177 (PSSEAMHLGH) carry the 'HIGH' region motif. The 'KMSKS' region signature appears at 353 to 357 (KMSAS). Ser355 is subject to Phosphoserine.

This sequence belongs to the class-I aminoacyl-tRNA synthetase family. As to quaternary structure, homodimer. Interacts with oxidized form of GAPDH. Post-translationally, proteolytic cleavage generates 2 forms; T1-TrpRS and T2-TrpRS.

The protein resides in the cytoplasm. The catalysed reaction is tRNA(Trp) + L-tryptophan + ATP = L-tryptophyl-tRNA(Trp) + AMP + diphosphate + H(+). Catalyzes the attachment of tryptophan to tRNA(Trp) in a two-step reaction: tryptophan is first activated by ATP to form Trp-AMP and then transferred to the acceptor end of the tRNA(Trp). Could also possess an angiostatic activity. The protein is Tryptophan--tRNA ligase, cytoplasmic of Rattus norvegicus (Rat).